A 570-amino-acid chain; its full sequence is MESVIRSSAKICPFMHSATGSMQSVKALKNANLPAIAQQCPFMGKAMEQRRGYASSASGASAAAAATATASTSASNSNSSVEASASADVVDHATKEASFDYQGLFDSDLAKKRMDKSYRFFNNINRLAKEFPMAHRKLEDDKVTVWCSNDYLALSKNQEVIEVMKKTLDKYGAGAGGTRNIAGHNKHALQLEAELATLHKKEGALVFSSCFVANDAVISLLGQKIKDLVIFSDELNHASMIVGIKHASTKKHIFKHNNLDQLEELLAMYPKSTPKLIAFESVYSMSGSVADIDKICDLAEKYGALTFLDEVHAVGLYGPHGAGVAEHCNFDAHRKAGIASPEFRTVMDRVDMITGTLGKSFGTVGGYVAGSLQLIDWVRSYAPGFIFTTTLPPAVMAGAAEAIRYQRSHLDLRQDQQRHTTYVKDGLADLGIPVMPNPSHIVPVLVGNPHLAKQASDILMDKHRIYVQAINFPTVARGTERLRITPTPGHTNDLSDILMDALEDVWSTLQLPRVRDWEAQGGLLGVGDPNHVPQPNLWTKDQLTLTNNDLHPNVKQPIIEQLEVSSGIRY.

Residues 1–53 constitute a mitochondrion transit peptide; the sequence is MESVIRSSAKICPFMHSATGSMQSVKALKNANLPAIAQQCPFMGKAMEQRRGY. Residues arginine 119, serine 232, and lysine 251 each coordinate substrate. Pyridoxal 5'-phosphate-binding residues include serine 284, histidine 312, and threonine 356. The active site involves lysine 359. The residue at position 359 (lysine 359) is an N6-(pyridoxal phosphate)lysine. Pyridoxal 5'-phosphate contacts are provided by threonine 388 and threonine 389. Residue threonine 474 participates in substrate binding.

This sequence belongs to the class-II pyridoxal-phosphate-dependent aminotransferase family. In terms of assembly, homodimer. Requires pyridoxal 5'-phosphate as cofactor.

The protein localises to the mitochondrion matrix. It carries out the reaction succinyl-CoA + glycine + H(+) = 5-aminolevulinate + CO2 + CoA. The protein operates within porphyrin-containing compound metabolism; protoporphyrin-IX biosynthesis; 5-aminolevulinate from glycine: step 1/1. Catalyzes the synthesis of 5-aminolevulinate (ALA) from succinyl-CoA and glycine, the first and rate-limiting step in heme biosynthesis. The chain is 5-aminolevulinate synthase, mitochondrial (HEM1) from Kluyveromyces lactis (strain ATCC 8585 / CBS 2359 / DSM 70799 / NBRC 1267 / NRRL Y-1140 / WM37) (Yeast).